We begin with the raw amino-acid sequence, 322 residues long: Allergen Asp f 4 (322 aa).

A signal peptide spans 1–20; the sequence is MQLKNSMLLLTALAAGSSVA. Residues 80–105 show a composition bias toward low complexity; the sequence is AAAAAASTPEPSSSHSDSSSSSGVSA. The disordered stretch occupies residues 80-109; it reads AAAAAASTPEPSSSHSDSSSSSGVSADWTN.

Its subcellular location is the secreted. This Aspergillus fumigatus (strain ATCC MYA-4609 / CBS 101355 / FGSC A1100 / Af293) (Neosartorya fumigata) protein is Allergen Asp f 4.